Here is a 569-residue protein sequence, read N- to C-terminus: MPKQADYTWGAKKNLDTIACLPEDVKQFKDLLYAMYGFTATEEEPTSEVHPGAILKGTVVDISKDFVVVDVGLKSEGVIPMSEFIDSSEGLTVGAEVEVYLDQTEDDEGKVVLSREKATRQRQWEYILAHCEEGSIVKGQITRKVKGGLIVDIGMEAFLPGSQIDNKKIKNLDDYVGKVCEFKILKINVDRRNVVVSRRELLEAERISKKAELIEQITIGERRKGIVKNITDFGVFLDLDGIDGLLHITDMTWKRIRHPSEMVELNQELEVIILSVDKEKGRVALGLKQKEHNPWEDIEKKYPPGKRVRGKIVKLLPYGAFIEIEEGIEGLIHVSEMSWVKNIVDPNEVVNKGDEVEVVVLSIQKDEGKISLGLKQTKHNPWDNIEEKYPIGLRVTAEIKNLTNYGAFVELEPGIEGLIHISDMSWIKKVSHPSELFKKGNTVEAVILSVDKESKKITLGVKQLTPNPWDEIEVMFPVGSDISGVVTKITAFGAFVELQNGIEGLIHVSELSEKPFAKIEDVLSIGDKVSAKVIKLDPDHKKVSLSIKEFLVHGGDAGHDAEEESSDRD.

S1 motif domains are found at residues 52–116, 134–199, 220–288, 305–375, 392–462, and 479–548; these read GAIL…LSRE, GSIV…VSRR, GERR…LGLK, GKRV…LGLK, GLRV…LGVK, and GSDI…LSIK.

It belongs to the bacterial ribosomal protein bS1 family.

Functionally, binds mRNA; thus facilitating recognition of the initiation point. It is needed to translate mRNA with a short Shine-Dalgarno (SD) purine-rich sequence. The polypeptide is Small ribosomal subunit protein bS1 (rpsA) (Chlamydia trachomatis serovar D (strain ATCC VR-885 / DSM 19411 / UW-3/Cx)).